The primary structure comprises 277 residues: Large ribosomal subunit protein uL2 (277 aa).

Residues 222–277 (GVAMNPVDHPHGGGEGRTSGGRHPVTPWGKPTKGKKTRSNKATDKFIMRSRHQRKK) are disordered.

This sequence belongs to the universal ribosomal protein uL2 family. As to quaternary structure, part of the 50S ribosomal subunit. Forms a bridge to the 30S subunit in the 70S ribosome.

One of the primary rRNA binding proteins. Required for association of the 30S and 50S subunits to form the 70S ribosome, for tRNA binding and peptide bond formation. It has been suggested to have peptidyltransferase activity; this is somewhat controversial. Makes several contacts with the 16S rRNA in the 70S ribosome. The chain is Large ribosomal subunit protein uL2 from Brucella melitensis biotype 1 (strain ATCC 23456 / CCUG 17765 / NCTC 10094 / 16M).